The sequence spans 703 residues: Protein STRUBBELIG-RECEPTOR FAMILY 8 (703 aa).

A signal peptide spans 1–27; that stretch reads MAIGDRAMFTVLLLFIASISGFSVVRC. Over 28 to 291 the chain is Extracellular; that stretch reads VTDPSDVQAL…GKGLSGGVVT (264 aa). LRR repeat units follow at residues 96–120, 122–142, 143–165, 166–190, 192–212, 213–233, and 234–256; these read LKSL…LPPN, TSLN…ISAM, GSLS…IFAD, HKSL…LSTV, TLSV…VLSG, LPLK…PKEL, and SSIQ…PQPE. N-linked (GlcNAc...) asparagine glycosylation is found at Asn120, Asn130, Asn149, and Asn178. Asn226 is a glycosylation site (N-linked (GlcNAc...) asparagine). The tract at residues 247-284 is disordered; sequence DNVPASPQPERPGKKETPSGSKKPKIGSEEKSSDSGKG. Residues 292-312 form a helical membrane-spanning segment; it reads GIVFGSLFVAGIIALVLYLCL. Residues 313 to 703 are Cytoplasmic-facing; sequence HKKKRKVRGS…PEHEHVDISF (391 aa). Positions 395–672 constitute a Protein kinase domain; sequence FSQENIIGEG…SEVVQQLVRL (278 aa). ATP is bound by residues 401–409 and Lys423; that span reads IGEGSLGRV.

Belongs to the protein kinase superfamily. Ser/Thr protein kinase family. In terms of tissue distribution, expressed in seedlings, roots, stems, leaves, flowers and siliques.

The protein resides in the membrane. The polypeptide is Protein STRUBBELIG-RECEPTOR FAMILY 8 (SRF8) (Arabidopsis thaliana (Mouse-ear cress)).